A 464-amino-acid polypeptide reads, in one-letter code: NADH dehydrogenase [ubiquinone] flavoprotein 1, mitochondrial (464 aa).

The N-terminal 20 residues, 1-20, are a transit peptide targeting the mitochondrion; the sequence is MLAARRLLGGSLPSRVSVRF. N6-acetyllysine; alternate is present on K81. K81 is subject to N6-succinyllysine; alternate. Residue 87–96 participates in NADH binding; that stretch reads GRGGAGFPTG. K104 bears the N6-acetyllysine mark. Residue 199–247 coordinates FMN; the sequence is RGAGAYICGEETALIESIEGKQGKPRLKPPFPADVGVFGCPTTVANVET. R257 is modified (omega-N-methylarginine). K375 is subject to N6-acetyllysine. Positions 379, 382, 385, and 425 each coordinate [4Fe-4S] cluster.

The protein belongs to the complex I 51 kDa subunit family. Core subunit of respiratory chain NADH dehydrogenase (Complex I) which is composed of 45 different subunits. This is a component of the flavoprotein-sulfur (FP) fragment of the enzyme. Interacts with RAB5IF. The cofactor is FMN. [4Fe-4S] cluster serves as cofactor.

It is found in the mitochondrion inner membrane. The enzyme catalyses a ubiquinone + NADH + 5 H(+)(in) = a ubiquinol + NAD(+) + 4 H(+)(out). Its function is as follows. Core subunit of the mitochondrial membrane respiratory chain NADH dehydrogenase (Complex I) which catalyzes electron transfer from NADH through the respiratory chain, using ubiquinone as an electron acceptor. Part of the peripheral arm of the enzyme, where the electrons from NADH are accepted by flavin mononucleotide (FMN) and then passed along a chain of iron-sulfur clusters by electron tunnelling to the final acceptor ubiquinone. Contains FMN, which is the initial electron acceptor as well as one iron-sulfur cluster. The polypeptide is NADH dehydrogenase [ubiquinone] flavoprotein 1, mitochondrial (Macaca fascicularis (Crab-eating macaque)).